The primary structure comprises 211 residues: Probable chemoreceptor glutamine deamidase CheD (211 aa).

The protein belongs to the CheD family.

It catalyses the reaction L-glutaminyl-[protein] + H2O = L-glutamyl-[protein] + NH4(+). Functionally, probably deamidates glutamine residues to glutamate on methyl-accepting chemotaxis receptors (MCPs), playing an important role in chemotaxis. This is Probable chemoreceptor glutamine deamidase CheD from Hahella chejuensis (strain KCTC 2396).